Consider the following 447-residue polypeptide: Glutamyl-tRNA(Gln) amidotransferase subunit A (447 aa).

Active-site charge relay system residues include Lys-51 and Ser-126. Ser-150 (acyl-ester intermediate) is an active-site residue.

Belongs to the amidase family. GatA subfamily. In terms of assembly, heterotrimer of A, B and C subunits.

The catalysed reaction is L-glutamyl-tRNA(Gln) + L-glutamine + ATP + H2O = L-glutaminyl-tRNA(Gln) + L-glutamate + ADP + phosphate + H(+). In terms of biological role, allows the formation of correctly charged Gln-tRNA(Gln) through the transamidation of misacylated Glu-tRNA(Gln) in organisms which lack glutaminyl-tRNA synthetase. The reaction takes place in the presence of glutamine and ATP through an activated gamma-phospho-Glu-tRNA(Gln). This Helicobacter hepaticus (strain ATCC 51449 / 3B1) protein is Glutamyl-tRNA(Gln) amidotransferase subunit A.